The following is a 397-amino-acid chain: 1-deoxy-D-xylulose 5-phosphate reductoisomerase (397 aa).

Thr12, Gly13, Ser14, Ile15, Gly38, Lys39, Asn40, and Asn126 together coordinate NADPH. Lys127 is a binding site for 1-deoxy-D-xylulose 5-phosphate. Residue Glu128 coordinates NADPH. Asp152 serves as a coordination point for Mn(2+). Residues Ser153, Glu154, Ser188, and His211 each coordinate 1-deoxy-D-xylulose 5-phosphate. A Mn(2+)-binding site is contributed by Glu154. Gly217 is a binding site for NADPH. Positions 224, 229, 230, and 233 each coordinate 1-deoxy-D-xylulose 5-phosphate. Mn(2+) is bound at residue Glu233.

This sequence belongs to the DXR family. Mg(2+) is required as a cofactor. Requires Mn(2+) as cofactor.

The enzyme catalyses 2-C-methyl-D-erythritol 4-phosphate + NADP(+) = 1-deoxy-D-xylulose 5-phosphate + NADPH + H(+). Its pathway is isoprenoid biosynthesis; isopentenyl diphosphate biosynthesis via DXP pathway; isopentenyl diphosphate from 1-deoxy-D-xylulose 5-phosphate: step 1/6. Catalyzes the NADPH-dependent rearrangement and reduction of 1-deoxy-D-xylulose-5-phosphate (DXP) to 2-C-methyl-D-erythritol 4-phosphate (MEP). The polypeptide is 1-deoxy-D-xylulose 5-phosphate reductoisomerase (Haemophilus influenzae (strain ATCC 51907 / DSM 11121 / KW20 / Rd)).